The chain runs to 334 residues: Nucleoid-associated protein YejK (334 aa).

It belongs to the YejK family.

It localises to the cytoplasm. The protein resides in the nucleoid. This is Nucleoid-associated protein YejK from Escherichia fergusonii (strain ATCC 35469 / DSM 13698 / CCUG 18766 / IAM 14443 / JCM 21226 / LMG 7866 / NBRC 102419 / NCTC 12128 / CDC 0568-73).